Reading from the N-terminus, the 339-residue chain is Tetraacyldisaccharide 4'-kinase (339 aa).

Residue 61 to 68 participates in ATP binding; sequence TAGGTGKT.

It belongs to the LpxK family.

It catalyses the reaction a lipid A disaccharide + ATP = a lipid IVA + ADP + H(+). Its pathway is glycolipid biosynthesis; lipid IV(A) biosynthesis; lipid IV(A) from (3R)-3-hydroxytetradecanoyl-[acyl-carrier-protein] and UDP-N-acetyl-alpha-D-glucosamine: step 6/6. Its function is as follows. Transfers the gamma-phosphate of ATP to the 4'-position of a tetraacyldisaccharide 1-phosphate intermediate (termed DS-1-P) to form tetraacyldisaccharide 1,4'-bis-phosphate (lipid IVA). The protein is Tetraacyldisaccharide 4'-kinase of Stenotrophomonas maltophilia (strain R551-3).